Reading from the N-terminus, the 398-residue chain is S-adenosylmethionine decarboxylase proenzyme (398 aa).

Active-site residues include Glu-18 and Glu-21. The Schiff-base intermediate with substrate; via pyruvic acid role is filled by Ser-78. Position 78 is a pyruvic acid (Ser); by autocatalysis (Ser-78). Cys-92 (proton donor; for catalytic activity) is an active-site residue. Active-site proton acceptor; for processing activity residues include Ser-243 and His-256.

It belongs to the eukaryotic AdoMetDC family. It depends on pyruvate as a cofactor. Is synthesized initially as an inactive proenzyme. Formation of the active enzyme involves a self-maturation process in which the active site pyruvoyl group is generated from an internal serine residue via an autocatalytic post-translational modification. Two non-identical subunits are generated from the proenzyme in this reaction, and the pyruvate is formed at the N-terminus of the alpha chain, which is derived from the carboxyl end of the proenzyme. The post-translation cleavage follows an unusual pathway, termed non-hydrolytic serinolysis, in which the side chain hydroxyl group of the serine supplies its oxygen atom to form the C-terminus of the beta chain, while the remainder of the serine residue undergoes an oxidative deamination to produce ammonia and the pyruvoyl group blocking the N-terminus of the alpha chain.

It carries out the reaction S-adenosyl-L-methionine + H(+) = S-adenosyl 3-(methylsulfanyl)propylamine + CO2. It functions in the pathway amine and polyamine biosynthesis; S-adenosylmethioninamine biosynthesis; S-adenosylmethioninamine from S-adenosyl-L-methionine: step 1/1. The sequence is that of S-adenosylmethionine decarboxylase proenzyme (SAMDC) from Oryza sativa subsp. indica (Rice).